A 199-amino-acid chain; its full sequence is Thymidine kinase (199 aa).

ATP-binding positions include 9–16 (GAMSSGKS) and 93–96 (DEAQ). Glu94 (proton acceptor) is an active-site residue. Cys151, Cys154, Cys188, and His191 together coordinate Zn(2+).

Belongs to the thymidine kinase family. Homotetramer.

The protein localises to the cytoplasm. The enzyme catalyses thymidine + ATP = dTMP + ADP + H(+). This chain is Thymidine kinase, found in Lactobacillus johnsonii (strain CNCM I-12250 / La1 / NCC 533).